Here is a 47-residue protein sequence, read N- to C-terminus: DLRQCTRNAPGSTWGRCCLNPMCGNFCCPRSGCTCAYNWRRGIYCSC.

Hydroxyproline; partial occurs at positions 10, 21, and 29. 4 cysteine pairs are disulfide-bonded: Cys-18/Cys-27, Cys-23/Cys-35, Cys-28/Cys-45, and Cys-33/Cys-47.

Homodimer. Pseudo-homodimer (identical sequence, different post-translational modifications). HydroxyPro-10 is only found in a minor form. In terms of tissue distribution, expressed by the venom duct.

It localises to the secreted. Alpha-conotoxins act on postsynaptic membranes, they bind to the nicotinic acetylcholine receptors (nAChR) and thus inhibit them. Through its two C-terminal domains, this homodimeric protein would bind to two nAChR allosteric sites, located outside the nAChR C-loop of the principal binding face and at the adjacent binding interface in a clockwise direction. This toxin specifically blocks mammalian neuronal nAChR of the alpha-7/CHRNA7, alpha-3-beta-2/CHRNA3-CHRNB2 and alpha-4-beta-2/CHRNA4-CHRNB2 subtypes. VxXXA and VxXXB inhibit alpha-7/CHRNA7 and alpha-3-beta-2/CHRNA3-CHRNB2 nAChR more efficiently than VxXXC. VxXXB is the most effective at inhibiting alpha-4-beta-2/CHRNA4-CHRNB2 nAChR, followed by VxXXC and VxXXA. This Conus vexillum (Flag cone) protein is Alpha-conotoxin VxXXC.